Reading from the N-terminus, the 822-residue chain is MEHHWGLITGNKEKVPLKSISVTLSINDFVAAVAATLHYENEEKVPIEAMFVFPMDEDSAVYSFEALVDGKKIVAELQDKTKAHSKYEEALSQGHQAYLLEEDDYSRDVFSCNVGNLQPGTKVAVTLRYVQELPLESDGALRYLLPAVLNPRYQLSEQSASSCLNVQKPIVPLEALPYTLSMVATITSQHGIERVQSNCSLSPIQYLTDDKTSAQVSLTEGHKFDRDVELLIYYREVHSPSVAVEKGMQDKKRDSLMGAPCAMVSFYPDIPEVNASKVCGEFVFLMDRSGSMQTPMRTEENSQLRIEAAKETLLLLLKSLPMGCYFNIYGFGSSYEQFFPESVKYTQETIEEAVERVKRLDADLGGTEILTPLRNIYKTSSIPGHPLQLFVFTDGEVSDTYSVIREVKLNSKKHRCFSFGIGQGASTSLIKNIARVSGGTAEFITGKDRMQAKALGSLKLALQCALDDISLSWELPPGLSVNMLSPEQPTIFRGQRLIIYAQLTGPMPQAESRGAVCLKHTLQGKSLENKVAFSLQPKENANFTIHRLAAKFLIQTKDLGSHEVSKEEKKDVMNISLQSGVLSSFTAFVAINKELNKPVQGPLAHRVIPRPMIATSTSMFMRSCSRLTGPFKNSRLKRRLCAADYVPYGHESTVYSSMPSPAPIENQGVADSSNEKSNSQNEHKAFGENVVLQLIFLQNANGSWKLDENLTKILGTTLEDTKAANPSQHGDPSAWATILAVLWLHANGQDLKCEWELLERKAVAWLHDHAGRGTTPPPFPSFHLHPREPCLYVLQRTQESLWLSQLCCLRTLSLQLILHFQD.

A VIT domain is found at 1-131; the sequence is MEHHWGLITG…KVAVTLRYVQ (131 aa). Residues 281-469 enclose the VWFA domain; sequence EFVFLMDRSG…LALQCALDDI (189 aa). The segment at 657–682 is disordered; it reads SMPSPAPIENQGVADSSNEKSNSQNE. Residues 669–680 show a composition bias toward polar residues; it reads VADSSNEKSNSQ.

Its function is as follows. May play a role in tumorigenesis as a tumor suppressor. Altered expression of this protein and disruption of the molecular pathway it is involved in may contribute directly to or modify tumorigenesis. The polypeptide is von Willebrand factor A domain-containing protein 5A (Vwa5a) (Rattus norvegicus (Rat)).